Here is a 38-residue protein sequence, read N- to C-terminus: U-theraphotoxin-Aju1a (38 aa).

3 disulfide bridges follow: C3-C24, C7-C30, and C16-C35.

Expressed by the venom gland.

The protein resides in the secreted. In terms of biological role, has strong antifungal activity against C.albicans MDM8, C.krusei IOC 4559 (MIC=2.5-5 uM), C.glabrata IOC 45658 (MIC=2.5-5 uM), C.albicans IOC 45588 (MIC=2.5-5 uM), C.parapsilosis IOC 456416 (MIC=2.5-5 uM), C.tropicalis IOC 45608 (MIC=2.5-5 uM), C.guilliermondii IOC 455716 (MIC=2.5-5 uM) and A.niger (MIC=5-10 uM). Lacks antifungal activity against B.bassiana. Has no antibacterial effect against Gram-positive bacteria M.luteus, S.epidermidis, S.aureus or against Gram-negative bacteria E.coli and P.aeruginosa. Has no hemolytic activity against human erythrocytes. Probable ion channel inhibitor. The chain is U-theraphotoxin-Aju1a from Avicularia juruensis (Yellow-banded pinktoe).